We begin with the raw amino-acid sequence, 91 residues long: Probable Fe(2+)-trafficking protein (91 aa).

The protein belongs to the Fe(2+)-trafficking protein family.

Functionally, could be a mediator in iron transactions between iron acquisition and iron-requiring processes, such as synthesis and/or repair of Fe-S clusters in biosynthetic enzymes. The polypeptide is Probable Fe(2+)-trafficking protein (Paraburkholderia phymatum (strain DSM 17167 / CIP 108236 / LMG 21445 / STM815) (Burkholderia phymatum)).